Consider the following 336-residue polypeptide: HTH-type transcriptional regulator AscG (336 aa).

One can recognise an HTH lacI-type domain in the interval 2–56 (TTMLEVAKRAGVSKATVSRVLSGNGYVSQETKDRVFQAVEESGYRPNLLARNLSA). A DNA-binding region (H-T-H motif) is located at residues 4 to 23 (MLEVAKRAGVSKATVSRVLS).

Repressor of the asc operon. The cryptic operon is activated by the insertion of IS186 into the ascG gene. This chain is HTH-type transcriptional regulator AscG (ascG), found in Escherichia coli (strain K12).